A 405-amino-acid chain; its full sequence is Corticosteroid-binding globulin (405 aa).

The N-terminal stretch at Met-1–Ala-22 is a signal peptide. Residues Asn-31, Asn-96, and Asn-176 are each glycosylated (N-linked (GlcNAc...) asparagine). Cortisol is bound at residue Gln-254. N-linked (GlcNAc...) asparagine glycosylation occurs at Asn-260. Residue Asn-286 participates in cortisol binding. Residues Asn-330 and Asn-369 are each glycosylated (N-linked (GlcNAc...) asparagine). Positions 390 and 393 each coordinate cortisol.

It belongs to the serpin family. Post-translationally, N-glycosylated; binds 5 oligosaccharide chains. In terms of processing, glycosylation in position Asn-260 is needed for steroid binding. Plasma; synthesized in liver. Has also been identified in a number of glycocorticoid responsive cells.

The protein resides in the secreted. In terms of biological role, major transport protein for glucocorticoids and progestins in the blood of almost all vertebrate species. The protein is Corticosteroid-binding globulin (SERPINA6) of Homo sapiens (Human).